A 452-amino-acid chain; its full sequence is Retinoid-inducible serine carboxypeptidase (452 aa).

A signal peptide spans 1–28 (MELSRRICLVRLWLLLLSFLLGFSAGSA). N-linked (GlcNAc...) asparagine glycans are attached at residues asparagine 64, asparagine 102, and asparagine 126. The active site involves serine 167. Asparagine 192 and asparagine 362 each carry an N-linked (GlcNAc...) asparagine glycan. Residues aspartate 371 and histidine 431 contribute to the active site.

The protein belongs to the peptidase S10 family. In terms of tissue distribution, highly expressed in aorta, bladder, and kidney with much lower levels in all other tissues analyzed. Expression in kidney is restricted to proximal convoluted tubules.

The protein localises to the secreted. Functionally, may be involved in vascular wall and kidney homeostasis. This Rattus norvegicus (Rat) protein is Retinoid-inducible serine carboxypeptidase (Scpep1).